We begin with the raw amino-acid sequence, 821 residues long: Cation/H(+) antiporter 15 (821 aa).

Helical transmembrane passes span 37–57 (LPLF…FVFI), 65–82 (RVIS…SVLG), 97–117 (VMVL…LVGV), 131–151 (ALTI…AFSF), 166–186 (ILFL…RILA), 200–220 (MSAA…AIAL), 228–248 (FASL…VFVV), 268–288 (FHIC…DAIG), 292–312 (VFGA…LTLI), 318–338 (FVSG…TNIA), 350–370 (FLVI…VAFF), 378–398 (GITL…VLNV), and 410–430 (FATM…IVTI). Residues 800 to 821 (DFPESPVHSHETKVTYGLENPR) form a disordered region.

This sequence belongs to the monovalent cation:proton antiporter 2 (CPA2) transporter (TC 2.A.37) family. CHX (TC 2.A.37.4) subfamily. Specifically expressed in pollen.

The protein localises to the membrane. May operate as a cation/H(+) antiporter. The sequence is that of Cation/H(+) antiporter 15 (CHX15) from Arabidopsis thaliana (Mouse-ear cress).